The sequence spans 359 residues: Phospho-N-acetylmuramoyl-pentapeptide-transferase (359 aa).

A run of 10 helical transmembrane segments spans residues 27 to 47 (IYAL…MMRW), 73 to 93 (TMGG…WADL), 94 to 114 (TNIY…VGFV), 134 to 154 (LLGQ…QPAY), 166 to 186 (FTPD…IGAS), 197 to 217 (GLAI…IYIA), 233 to 253 (GVGE…GFLW), 261 to 281 (LFMG…IAVL), 286 to 306 (LLLI…IMQV), and 336 to 356 (KIVI…LSTL).

This sequence belongs to the glycosyltransferase 4 family. MraY subfamily. Mg(2+) is required as a cofactor.

Its subcellular location is the cell inner membrane. The catalysed reaction is UDP-N-acetyl-alpha-D-muramoyl-L-alanyl-gamma-D-glutamyl-meso-2,6-diaminopimeloyl-D-alanyl-D-alanine + di-trans,octa-cis-undecaprenyl phosphate = di-trans,octa-cis-undecaprenyl diphospho-N-acetyl-alpha-D-muramoyl-L-alanyl-D-glutamyl-meso-2,6-diaminopimeloyl-D-alanyl-D-alanine + UMP. The protein operates within cell wall biogenesis; peptidoglycan biosynthesis. In terms of biological role, catalyzes the initial step of the lipid cycle reactions in the biosynthesis of the cell wall peptidoglycan: transfers peptidoglycan precursor phospho-MurNAc-pentapeptide from UDP-MurNAc-pentapeptide onto the lipid carrier undecaprenyl phosphate, yielding undecaprenyl-pyrophosphoryl-MurNAc-pentapeptide, known as lipid I. In Maridesulfovibrio salexigens (strain ATCC 14822 / DSM 2638 / NCIMB 8403 / VKM B-1763) (Desulfovibrio salexigens), this protein is Phospho-N-acetylmuramoyl-pentapeptide-transferase.